The primary structure comprises 232 residues: MLKLTDITWLYHHLPMRFSLTVERGEQVAILGPSGAGKSTLLNLIAGFLTPASGSLTIDGVDHTTTPPSRRPVSMLFQENNLFSHLTVAQNIGLGLNPGLKLNAAQQEKMHAIARQMGIDNLMARLPGELSGGQRQRVALARCLVREQPILLLDEPFSALDPALRQEMLTLVSTSCQQQKMTLLMVSHSVEDAARIATRSVVVADGRIAWQGKTEEVLSGKGSASAIWGIQG.

Positions 2–230 (LKLTDITWLY…KGSASAIWGI (229 aa)) constitute an ABC transporter domain. Residue 32–39 (GPSGAGKS) coordinates ATP.

It belongs to the ABC transporter superfamily. Thiamine importer (TC 3.A.1.19.1) family. In terms of assembly, the complex is composed of two ATP-binding proteins (ThiQ), two transmembrane proteins (ThiP) and a solute-binding protein (ThiB).

It localises to the cell inner membrane. It carries out the reaction thiamine(out) + ATP + H2O = thiamine(in) + ADP + phosphate + H(+). Part of the ABC transporter complex ThiBPQ involved in thiamine import. Responsible for energy coupling to the transport system. This is Thiamine import ATP-binding protein ThiQ from Shigella flexneri.